The chain runs to 548 residues: 5-epi-aristolochene synthase 3 (548 aa).

D301, D305, D444, T448, and E452 together coordinate Mg(2+). Residues 301-305 (DDTFD) carry the DDXXD motif motif.

The protein belongs to the terpene synthase family. Monomer. It depends on Mg(2+) as a cofactor. As to expression, expressed in roots, but not in shoots.

Its subcellular location is the cytoplasm. The enzyme catalyses (2E,6E)-farnesyl diphosphate = (+)-5-epi-aristolochene + diphosphate. Its pathway is secondary metabolite biosynthesis; terpenoid biosynthesis. Functionally, catalyzes the cyclization of trans,trans-farnesyl diphosphate (FPP) to the bicyclic intermediate 5-epi-aristolochene, initial step in the conversion of FPP to the sesquiterpenoid antifungal phytoalexin capsidiol. Produces germacrene A as an enzyme-bound intermediate that is not released by the enzyme, but is further cyclized to produce the bicyclic 5-epi-aristolochene. In Nicotiana attenuata (Coyote tobacco), this protein is 5-epi-aristolochene synthase 3.